We begin with the raw amino-acid sequence, 336 residues long: Methionyl-tRNA formyltransferase (336 aa).

112 to 115 (SILP) serves as a coordination point for (6S)-5,6,7,8-tetrahydrofolate.

The protein belongs to the Fmt family.

The enzyme catalyses L-methionyl-tRNA(fMet) + (6R)-10-formyltetrahydrofolate = N-formyl-L-methionyl-tRNA(fMet) + (6S)-5,6,7,8-tetrahydrofolate + H(+). Attaches a formyl group to the free amino group of methionyl-tRNA(fMet). The formyl group appears to play a dual role in the initiator identity of N-formylmethionyl-tRNA by promoting its recognition by IF2 and preventing the misappropriation of this tRNA by the elongation apparatus. This Trichodesmium erythraeum (strain IMS101) protein is Methionyl-tRNA formyltransferase.